A 192-amino-acid polypeptide reads, in one-letter code: MKFATFLDQQIAEHAETLAVTGAAVREPFQRLVQACVDSLAAGGKILFFGNGGSAADAQHLAAELVIRYRYNRKALAALALTTDTSTLTACANDFSYEEIFSRQIEALGRPGDVAIGITTSGSSPNVLTALAVARDMGLVAAGFAGRDGGKMVGLADPLLIVPSNVTARIQEMHILIGHALCDQVEAVAAPA.

In terms of domain architecture, SIS spans 36–192 (CVDSLAAGGK…DQVEAVAAPA (157 aa)). Position 51 to 53 (51 to 53 (NGG)) interacts with substrate. Residues His-60 and Glu-64 each contribute to the Zn(2+) site. Substrate-binding positions include Glu-64, 93 to 94 (ND), 119 to 121 (TTS), Ser-124, and Gln-171. Gln-171 and His-179 together coordinate Zn(2+).

It belongs to the SIS family. GmhA subfamily. As to quaternary structure, homotetramer. Requires Zn(2+) as cofactor.

It localises to the cytoplasm. The catalysed reaction is 2 D-sedoheptulose 7-phosphate = D-glycero-alpha-D-manno-heptose 7-phosphate + D-glycero-beta-D-manno-heptose 7-phosphate. It participates in carbohydrate biosynthesis; D-glycero-D-manno-heptose 7-phosphate biosynthesis; D-glycero-alpha-D-manno-heptose 7-phosphate and D-glycero-beta-D-manno-heptose 7-phosphate from sedoheptulose 7-phosphate: step 1/1. Functionally, catalyzes the isomerization of sedoheptulose 7-phosphate in D-glycero-D-manno-heptose 7-phosphate. The protein is Phosphoheptose isomerase of Paramagnetospirillum magneticum (strain ATCC 700264 / AMB-1) (Magnetospirillum magneticum).